The chain runs to 382 residues: Ribosomal RNA large subunit methyltransferase G (382 aa).

This sequence belongs to the methyltransferase superfamily. RlmG family.

The protein localises to the cytoplasm. It carries out the reaction guanosine(1835) in 23S rRNA + S-adenosyl-L-methionine = N(2)-methylguanosine(1835) in 23S rRNA + S-adenosyl-L-homocysteine + H(+). In terms of biological role, specifically methylates the guanine in position 1835 (m2G1835) of 23S rRNA. This Aliivibrio fischeri (strain ATCC 700601 / ES114) (Vibrio fischeri) protein is Ribosomal RNA large subunit methyltransferase G.